The primary structure comprises 493 residues: Aminotransferase swnA (493 aa).

The protein belongs to the class-I pyridoxal-phosphate-dependent aminotransferase family. Pyridoxal 5'-phosphate serves as cofactor.

Its pathway is mycotoxin biosynthesis. Its function is as follows. Aminotransferase; part of the gene cluster that mediates the biosynthesis of swainsonine (SW), a cytotoxic fungal alkaloid and a potential cancer therapy drug. Swainsonine production occurs via a multibranched pathway and is dispensable for fungal colonization of plants and infection of insect hosts. The first step of swainsonine biosynthesis is the production of the precursor pipecolic acid (PA) via conversion of L-lysine (Lys) to 1-piperideine-6-carboxylate (P6C) by the aminotransferase swnA, the latter being further reduced to PA by the reductase swnR. The PKS-NRPS hybrid synthetase swnK uptakes and condensates PA and malonyl-CoA with and without skipping of the ketoreductase (KR) domain in order to produce 3 intermediates, 1-oxoindolizidine, (1S)-1-hydroxyindolizin, and (1R)-1-hydroxyindolizine; with the transisomer (1S)-1-hydroxyindolizin being predominant. The terminal thioester reductase (TE) domain of swnK is involved in reduction of the thioester bond to release the intermediate aldehydes. The oxidoreductase swnN could contribute to the reduction of 1-oxoindolizidine to (1S)-1-hydroxyindolizin and (1R)-1-hydroxyindolizine, contributing to the major route of SW production. The dioxygenase swnH2 would be responsible for the oxidization of (1R)-1-hydroxyindolizine into (1R,2S)-1,2-dihydroxyindolizine and of (1S)-1-hydroxyindolizin to yield both (1R,2S)-1,2-dihydroxyindolizine and (1S,2S)-1,2-dihydroxyindolizine. The dioxygenase swnH1 then performs the conversion of the 1,2-dihydroxyindolizine epimers to SW. The protein is Aminotransferase swnA of Arthroderma benhamiae (strain ATCC MYA-4681 / CBS 112371) (Trichophyton mentagrophytes).